A 379-amino-acid polypeptide reads, in one-letter code: Ascochitine biosynthesis cluster protein 8 (379 aa).

Transmembrane regions (helical) follow at residues 87–107, 116–136, and 141–161; these read ELIASVLALVARFGALVLDLE, VGPVSILGFCTGLLAGAVAAC, and IKVFDLACEVLAISFRLVVAL.

The protein localises to the membrane. Its pathway is mycotoxin biosynthesis. Functionally, part of the gene cluster that mediates the biosynthesis of the selective antifungal agent ascochitine, an o-quinone methide that plays a possible protective role against other microbial competitors in nature and is considered to be important for pathogenicity of legume-associated Didymella species. The pathway probably begins with the synthesis of a keto-aldehyde intermediate by the ascochitine non-reducing polyketide synthase pksAC from successive condensations of 4 malonyl-CoA units, presumably with a simple acetyl-CoA starter unit. Release of the keto-aldehyde intermediate is consistent with the presence of the C-terminal reductive release domain. The HR-PKS (orf7) probably makes a diketide starter unit which is passed to the non-reducing polyketide synthase pksAC for further extension, producing ascochital and ascochitine. The aldehyde dehydrogenase (orf1), the 2-oxoglutarate-dependent dioxygenase (orf3) and the dehydrogenase (orf9) are probably involved in subsequent oxidations of methyl groups to the carboxylic acid of the heterocyclic ring. The ascochitine gene cluster also includes a gene encoding a short peptide with a cupin domain (orf2) that is often found in secondary metabolite gene clusters and which function has still to be determined. The protein is Ascochitine biosynthesis cluster protein 8 of Didymella fabae (Leaf and pod spot disease fungus).